The primary structure comprises 123 residues: Holo-[acyl-carrier-protein] synthase (123 aa).

Mg(2+) is bound by residues Asp8 and Glu60.

This sequence belongs to the P-Pant transferase superfamily. AcpS family. Mg(2+) serves as cofactor.

Its subcellular location is the cytoplasm. The catalysed reaction is apo-[ACP] + CoA = holo-[ACP] + adenosine 3',5'-bisphosphate + H(+). Functionally, transfers the 4'-phosphopantetheine moiety from coenzyme A to a Ser of acyl-carrier-protein. The polypeptide is Holo-[acyl-carrier-protein] synthase (Wolbachia pipientis wMel).